We begin with the raw amino-acid sequence, 70 residues long: Probable U6 snRNA-associated Sm-like protein (70 aa).

The Sm domain maps to 3–70; the sequence is DPFCFLKMYL…ILFVGPRLLL (68 aa).

The protein belongs to the snRNP Sm proteins family.

The protein resides in the nucleus. Functionally, binds specifically to the 3'-terminal U-tract of U6 snRNA. The sequence is that of Probable U6 snRNA-associated Sm-like protein from Encephalitozoon cuniculi (strain GB-M1) (Microsporidian parasite).